The sequence spans 408 residues: Eukaryotic initiation factor 4A-II (408 aa).

The segment at 1-22 (MSGGSADYNSREHGGPEGMDPD) is disordered. Residues 34–62 (DNFDDMNLKESLLRGIYAYGFEKPSAIQQ) carry the Q motif motif. The region spanning 65 to 236 (IIPCIKGYDV…KKFMRDPIRI (172 aa)) is the Helicase ATP-binding domain. 77–84 (QAQSGTGK) contributes to the ATP binding site. Thr-160 bears the Phosphothreonine mark. Residues 183–186 (LDEA) carry the DEAD box motif. Positions 247–408 (GIKQFYINVE…EMPMNVADLI (162 aa)) constitute a Helicase C-terminal domain.

Belongs to the DEAD box helicase family. eIF4A subfamily. EIF4F is a multi-subunit complex, the composition of which varies with external and internal environmental conditions. It is composed of at least EIF4A, EIF4E and EIF4G1/EIFFG3. Interacts with EIF4E. May interact with NOM1.

The enzyme catalyses ATP + H2O = ADP + phosphate + H(+). Functionally, ATP-dependent RNA helicase which is a subunit of the eIF4F complex involved in cap recognition and is required for mRNA binding to ribosome. In the current model of translation initiation, eIF4A unwinds RNA secondary structures in the 5'-UTR of mRNAs which is necessary to allow efficient binding of the small ribosomal subunit, and subsequent scanning for the initiator codon. This chain is Eukaryotic initiation factor 4A-II (EIF4A2), found in Macaca fascicularis (Crab-eating macaque).